Here is a 318-residue protein sequence, read N- to C-terminus: Deoxymugineic acid synthase 1 (318 aa).

Position 48 (D48) interacts with NADP(+). Y53 serves as the catalytic Proton donor. H116 is a binding site for substrate. NADP(+) is bound by residues 162–163 (CN), Q184, 262–270 (FDEARMREN), and 277–285 (ELTEEERQR).

It belongs to the aldo/keto reductase family. In terms of tissue distribution, confined to cells participating in long distance transport (e.g. in the parts of pericycle cells adjacent to the protoxylem and metaxylem) in roots and to vascular bundles in shoots.

It carries out the reaction 2'-deoxymugineate + NAD(+) = 3''-deamino-3''-oxonicotianamine + NADH + H(+). The enzyme catalyses 2'-deoxymugineate + NADP(+) = 3''-deamino-3''-oxonicotianamine + NADPH + H(+). It participates in siderophore biosynthesis. Catalyzes the reduction of a 3''-keto intermediate during the biosynthesis of 2'-deoxymugineic acid (DMA) from L-Met. Involved in the formation of phytosiderophores (MAs) belonging to the mugineic acid family and required to acquire iron. The chain is Deoxymugineic acid synthase 1 from Oryza sativa subsp. japonica (Rice).